The chain runs to 242 residues: Triosephosphate isomerase (242 aa).

Residue 9–11 coordinates substrate; it reads NWK. Histidine 96 functions as the Electrophile in the catalytic mechanism. Glutamate 165 serves as the catalytic Proton acceptor. Substrate is bound by residues glycine 171, serine 204, and 225–226; that span reads GG.

It belongs to the triosephosphate isomerase family. Homodimer.

It is found in the cytoplasm. It catalyses the reaction D-glyceraldehyde 3-phosphate = dihydroxyacetone phosphate. The protein operates within carbohydrate biosynthesis; gluconeogenesis. It participates in carbohydrate degradation; glycolysis; D-glyceraldehyde 3-phosphate from glycerone phosphate: step 1/1. In terms of biological role, involved in the gluconeogenesis. Catalyzes stereospecifically the conversion of dihydroxyacetone phosphate (DHAP) to D-glyceraldehyde-3-phosphate (G3P). This is Triosephosphate isomerase from Synechocystis sp. (strain ATCC 27184 / PCC 6803 / Kazusa).